The following is a 1720-amino-acid chain: TOG array regulator of axonemal microtubules protein 1 (1720 aa).

TOG stretches follow at residues 94 to 312 (EEDT…RRLE) and 352 to 596 (PQEL…MPSS). HEAT repeat units follow at residues 175 to 212 (AFSLALLPQLVVSLREENPALRKDALQILHICLKRSPG), 214 to 247 (VLRTLIQQGLESTDARLRASTALLLPILLTTEDL), 251 to 289 (LDLTEVIISLARKLGDQETEEESETAFSALQQIGERLGQ), 345 to 384 (NLKFGIIPQELHSRLLDQEDYKNRTQAVEELKQVLGKFNP), 390 to 427 (SSLVGFISLLYNLLDDSNFKVVHGTLEVLHLLVIRLGE), 431 to 466 (QFLGPVIAASVKVLADNKLVIKQEYMKIFLKLMKEV), 467 to 504 (GPQQVLCLLLEHLKHKHSRVREEVVNICICSLLTYPSE), and 506 to 543 (FDLPKLSFDLAPALVDSKRRVRQAALEAFAVLASSMGS). Polar residues-rich tracts occupy residues 794–809 (FGSQTECTSSNGQNPS), 819–829 (PVSSPRTSPKH), 842–852 (DNSVNFSNSWP), and 868–877 (LVSQKSSDPT). Disordered stretches follow at residues 794–924 (FGSQ…SLLP), 970–998 (HSSLRSLRNSAAKKRAKLSGSTSDLESPD), and 1067–1087 (KKISHIAEQSPSAGSSSNPQQ). Residues 1073 to 1087 (AEQSPSAGSSSNPQQ) are compositionally biased toward polar residues. The tract at residues 1256 to 1425 (EIALTEALRL…YIKDSVRNLQ (170 aa)) is TOG 3. 2 HEAT repeats span residues 1294 to 1331 (TKLHETNFAVVQEVKNLRSGVSRAAVVCLSDLFTYLKK) and 1335 to 1372 (QELDTTVKVLLHKAGESNTFIREDVDKALRAMVNNVTP). Residues 1430 to 1462 (GEIPLDTPSAKGRRSHTGSVGNTRSSSVSRDAF) form a disordered region. Over residues 1446-1458 (TGSVGNTRSSSVS) the composition is skewed to polar residues. The interval 1484 to 1720 (SLESAEYLKL…LLDMTILNEL (237 aa)) is TOG 4. 3 HEAT repeats span residues 1485–1522 (LESAEYLKLITGLLNAKDFRDRINGIKQLLSDTENNQD), 1526–1563 (GNIVKIFDAFKSRLHDSNSKVNLVALETMHKMIPLLRD), and 1567–1605 (PIINMLIPAIVDNNLNSKNPGIYAAATNVVQALSQHVDN).

It belongs to the Crescerin family. Interacts with ARMC9, CCDC66, CEP104 and CSPP1.

It localises to the cell projection. The protein localises to the cilium. The protein resides in the cytoplasm. It is found in the cytoskeleton. Its subcellular location is the cilium axoneme. In terms of biological role, involved in ciliogenesis. It is required for appropriate acetylation and polyglutamylation of ciliary microtubules, and regulation of cilium length. Interacts with microtubules and promotes microtubule polymerization via its HEAT repeat domains, especially those in TOG region 2 and 4. The chain is TOG array regulator of axonemal microtubules protein 1 from Homo sapiens (Human).